Here is a 596-residue protein sequence, read N- to C-terminus: Elongation factor 4 (596 aa).

Residues 2–184 (RNIRNFSIIA…AIVHRIPPPK (183 aa)) enclose the tr-type G domain. GTP contacts are provided by residues 14 to 19 (DHGKST) and 131 to 134 (NKID).

The protein belongs to the TRAFAC class translation factor GTPase superfamily. Classic translation factor GTPase family. LepA subfamily.

The protein resides in the cell inner membrane. The enzyme catalyses GTP + H2O = GDP + phosphate + H(+). Its function is as follows. Required for accurate and efficient protein synthesis under certain stress conditions. May act as a fidelity factor of the translation reaction, by catalyzing a one-codon backward translocation of tRNAs on improperly translocated ribosomes. Back-translocation proceeds from a post-translocation (POST) complex to a pre-translocation (PRE) complex, thus giving elongation factor G a second chance to translocate the tRNAs correctly. Binds to ribosomes in a GTP-dependent manner. This chain is Elongation factor 4, found in Xanthomonas euvesicatoria pv. vesicatoria (strain 85-10) (Xanthomonas campestris pv. vesicatoria).